The chain runs to 479 residues: 5-hydroxytryptamine receptor 2B (479 aa).

The Extracellular segment spans residues 1-55 (MASSYKMSEQSTTSEHILQKTCDHLILTNRSGLETDSVAEEMKQTVEGQGHTVHW). N-linked (GlcNAc...) asparagine glycosylation is present at Asn29. A helical transmembrane segment spans residues 56–78 (AALLILAVIIPTIGGNILVILAV). At 79-89 (ALEKRLQYATN) the chain is on the cytoplasmic side. Residues 90-112 (YFLMSLAIADLLVGLFVMPIALL) traverse the membrane as a helical segment. At 113 to 128 (TIMFEAIWPLPLALCP) the chain is on the extracellular side. Residues Cys127 and Cys206 are joined by a disulfide bond. Residues 129 to 150 (AWLFLDVLFSTASIMHLCAISL) traverse the membrane as a helical segment. Ergotamine contacts are provided by Asp134 and Thr139. A DRY motif; important for ligand-induced conformation changes motif is present at residues 151–153 (DRY). Topologically, residues 151–170 (DRYIAIKKPIQANQCNSRAT) are cytoplasmic. The helical transmembrane segment at 171 to 191 (AFIKITVVWLISIGIAIPVPI) threads the bilayer. Residues 192 to 215 (KGIETDVINPHNVTCELTKDRFGS) are Extracellular-facing. Leu208 is a binding site for ergotamine. Residues 211–214 (DRFG) carry the [DE]RFG motif; may stabilize a conformation that preferentially activates signaling via beta-arrestin family members motif. Residues 216-238 (FMVFGSLAAFFAPLTIMVVTYFL) traverse the membrane as a helical segment. The Cytoplasmic portion of the chain corresponds to 239–323 (TIHTLQKKAY…TISNEQRASK (85 aa)). A helical transmembrane segment spans residues 324-344 (ALGVVFFLFLLMWCPFFITNL). The Extracellular segment spans residues 345-359 (TLALCDSCNQTTLKT). Cys349 and Cys352 are disulfide-bonded. Residues 360–381 (LLEIFVWIGYVSSGVNPLIYTL) traverse the membrane as a helical segment. The NPxxY motif; important for ligand-induced conformation changes and signaling signature appears at 375 to 379 (NPLIY). The Cytoplasmic segment spans residues 382 to 479 (FNKTFREAFG…DKAEEQVSYI (98 aa)). Cys396 carries the S-palmitoyl cysteine lipid modification. The short motif at 477–479 (SYI) is the PDZ-binding element.

This sequence belongs to the G-protein coupled receptor 1 family. In terms of assembly, interacts (via C-terminus) with MPDZ. Ubiquitous. Detected in intestine, heart, skeletal muscle, testis, urinary bladder, stomach, liver, lung, brain and kidney. Detected in osteoblasts. Detected in the raphe nucleus in the brain, in dorsal root ganglion neurons, the brain stem, cerebellum and spinal cord. Detected in interstitial cells of Cajal in the small intestine.

It localises to the cell membrane. It is found in the synapse. The protein resides in the synaptosome. G-protein coupled receptor for 5-hydroxytryptamine (serotonin). Also functions as a receptor for various ergot alkaloid derivatives and psychoactive substances. Ligand binding causes a conformation change that triggers signaling via guanine nucleotide-binding proteins (G proteins) and modulates the activity of downstream effectors. HTR2B is coupled to G(q)/G(11) G alpha proteins and activates phospholipase C-beta, releasing diacylglycerol (DAG) and inositol 1,4,5-trisphosphate (IP3) second messengers that modulate the activity of phosphatidylinositol 3-kinase and promote the release of Ca(2+) ions from intracellular stores, respectively. Beta-arrestin family members inhibit signaling via G proteins and mediate activation of alternative signaling pathways. Plays a role in the regulation of dopamine and 5-hydroxytryptamine release, 5-hydroxytryptamine uptake and in the regulation of extracellular dopamine and 5-hydroxytryptamine levels, and thereby affects neural activity. May play a role in the perception of pain. Plays a role in the regulation of behavior, including impulsive behavior. Required for normal proliferation of embryonic cardiac myocytes and normal heart development. Protects cardiomyocytes against apoptosis. Plays a role in the adaptation of pulmonary arteries to chronic hypoxia. Plays a role in vasoconstriction. Required for normal osteoblast function and proliferation, and for maintaining normal bone density. Required for normal proliferation of the interstitial cells of Cajal in the intestine. In Mus musculus (Mouse), this protein is 5-hydroxytryptamine receptor 2B (Htr2b).